The sequence spans 307 residues: Methionyl-tRNA formyltransferase (307 aa).

Residue 108 to 111 (SLLP) coordinates (6S)-5,6,7,8-tetrahydrofolate.

Belongs to the Fmt family.

It catalyses the reaction L-methionyl-tRNA(fMet) + (6R)-10-formyltetrahydrofolate = N-formyl-L-methionyl-tRNA(fMet) + (6S)-5,6,7,8-tetrahydrofolate + H(+). Attaches a formyl group to the free amino group of methionyl-tRNA(fMet). The formyl group appears to play a dual role in the initiator identity of N-formylmethionyl-tRNA by promoting its recognition by IF2 and preventing the misappropriation of this tRNA by the elongation apparatus. The sequence is that of Methionyl-tRNA formyltransferase from Stenotrophomonas maltophilia (strain K279a).